The following is a 419-amino-acid chain: UDP-N-acetylglucosamine 1-carboxyvinyltransferase (419 aa).

Phosphoenolpyruvate is bound at residue 22-23; sequence KN. R91 contacts UDP-N-acetyl-alpha-D-glucosamine. C115 serves as the catalytic Proton donor. C115 carries the 2-(S-cysteinyl)pyruvic acid O-phosphothioketal modification. UDP-N-acetyl-alpha-D-glucosamine-binding positions include 120–124, 160–163, D305, and I327; these read RPVDL and KVSV.

Belongs to the EPSP synthase family. MurA subfamily.

Its subcellular location is the cytoplasm. The catalysed reaction is phosphoenolpyruvate + UDP-N-acetyl-alpha-D-glucosamine = UDP-N-acetyl-3-O-(1-carboxyvinyl)-alpha-D-glucosamine + phosphate. The protein operates within cell wall biogenesis; peptidoglycan biosynthesis. Its function is as follows. Cell wall formation. Adds enolpyruvyl to UDP-N-acetylglucosamine. This is UDP-N-acetylglucosamine 1-carboxyvinyltransferase from Klebsiella pneumoniae (strain 342).